Reading from the N-terminus, the 380-residue chain is Cytochrome b (380 aa).

4 helical membrane passes run 34-54 (FGSL…LLAA), 78-99 (WLIR…YLHI), 114-134 (WNTG…GYVL), and 179-199 (FFTL…IHLT). 2 residues coordinate heme b: histidine 84 and histidine 98. 2 residues coordinate heme b: histidine 183 and histidine 197. Histidine 202 contacts a ubiquinone. 4 helical membrane-spanning segments follow: residues 227-247 (LKDI…ALFS), 289-309 (LGGV…PLLH), 321-341 (FSQL…WVGS), and 348-368 (FIII…ILFP).

Belongs to the cytochrome b family. The cytochrome bc1 complex contains 11 subunits: 3 respiratory subunits (MT-CYB, CYC1 and UQCRFS1), 2 core proteins (UQCRC1 and UQCRC2) and 6 low-molecular weight proteins (UQCRH/QCR6, UQCRB/QCR7, UQCRQ/QCR8, UQCR10/QCR9, UQCR11/QCR10 and a cleavage product of UQCRFS1). This cytochrome bc1 complex then forms a dimer. Heme b is required as a cofactor.

The protein localises to the mitochondrion inner membrane. Its function is as follows. Component of the ubiquinol-cytochrome c reductase complex (complex III or cytochrome b-c1 complex) that is part of the mitochondrial respiratory chain. The b-c1 complex mediates electron transfer from ubiquinol to cytochrome c. Contributes to the generation of a proton gradient across the mitochondrial membrane that is then used for ATP synthesis. The polypeptide is Cytochrome b (MT-CYB) (Bugeranus carunculatus (Wattled crane)).